The chain runs to 245 residues: Myelin protein P0 (245 aa).

The signal sequence occupies residues 1–28; the sequence is MEPSGLRTPCSLLALVLLSALVLTPTLA. Residues 29 to 143 enclose the Ig-like V-type domain; sequence IEVYTDREVY…VGKSSYVHLQ (115 aa). Residues 29–153 are Extracellular-facing; the sequence is IEVYTDREVY…VQEKGPARAG (125 aa). A disulfide bridge links Cys49 with Cys125. Asn120 carries an N-linked (GlcNAc...) asparagine glycan. The chain crosses the membrane as a helical span at residues 154-174; sequence LILGIIIAVALALVIVVTILI. Over 175–245 the chain is Cytoplasmic; the sequence is LLIRYCWLRR…GIGDSRKDRK (71 aa). Basic and acidic residues-rich tracts occupy residues 199–208 and 224–245; these read KLHKAKDSSK and TRGK…KDRK. Residues 199-245 are disordered; it reads KLHKAKDSSKRSSRQTPILYAMLDQTRGKSSEKKAKGGIGDSRKDRK.

The protein belongs to the myelin P0 protein family.

Its subcellular location is the cell membrane. Creation of an extracellular membrane face which guides the wrapping process and ultimately compacts adjacent lamellae. This chain is Myelin protein P0 (mpz), found in Xenopus laevis (African clawed frog).